The chain runs to 393 residues: STE20-related kinase adapter protein alpha (393 aa).

Phosphoserine occurs at positions 2 and 9. Residues 32–341 (YELLSVIGKG…ASTLLNHSFF (310 aa)) form the Protein kinase domain. At Thr-381 the chain carries Phosphothreonine; by LKB1.

Belongs to the protein kinase superfamily. STE Ser/Thr protein kinase family. STE20 subfamily. In terms of assembly, component of a trimeric complex composed of STK11/LKB1, STRAD (STRADA or STRADB) and CAB39/MO25 (CAB39/MO25alpha or CAB39L/MO25beta): the complex tethers STK11/LKB1 in the cytoplasm and stimulates its catalytic activity. Expressed in liver.

The protein resides in the nucleus. It localises to the cytoplasm. Its function is as follows. Pseudokinase which, in complex with CAB39/MO25 (CAB39/MO25alpha or CAB39L/MO25beta), binds to and activates STK11/LKB1. Adopts a closed conformation typical of active protein kinases and binds STK11/LKB1 as a pseudosubstrate, promoting conformational change of STK11/LKB1 in an active conformation. The protein is STE20-related kinase adapter protein alpha (Strada) of Rattus norvegicus (Rat).